The sequence spans 226 residues: UPF0319 protein YpAngola_A3206 (226 aa).

A signal peptide spans 1–20 (MKLGLVAGMLAVCFSFSSVA).

The protein belongs to the UPF0319 family.

In Yersinia pestis bv. Antiqua (strain Angola), this protein is UPF0319 protein YpAngola_A3206.